The following is a 353-amino-acid chain: UPF0283 membrane protein YcjF (353 aa).

A run of 3 helical transmembrane segments spans residues 70 to 90 (MVMG…VQWT), 100 to 120 (VALG…GSVV), and 213 to 233 (ESTL…FIAW).

The protein belongs to the UPF0283 family.

It is found in the cell inner membrane. This Escherichia coli O45:K1 (strain S88 / ExPEC) protein is UPF0283 membrane protein YcjF.